Here is a 187-residue protein sequence, read N- to C-terminus: GTP cyclohydrolase 1 (187 aa).

Zn(2+)-binding residues include Cys-76, His-79, and Cys-148.

This sequence belongs to the GTP cyclohydrolase I family. As to quaternary structure, homomer.

It carries out the reaction GTP + H2O = 7,8-dihydroneopterin 3'-triphosphate + formate + H(+). Its pathway is cofactor biosynthesis; 7,8-dihydroneopterin triphosphate biosynthesis; 7,8-dihydroneopterin triphosphate from GTP: step 1/1. In Desulforamulus reducens (strain ATCC BAA-1160 / DSM 100696 / MI-1) (Desulfotomaculum reducens), this protein is GTP cyclohydrolase 1.